Here is a 244-residue protein sequence, read N- to C-terminus: Globin-like protein 9 (244 aa).

The tract at residues 1–38 (MRRMAKYDRSYSMQDAHGPNGLARRGTQRGCSRSKSTR) is disordered. The 154-residue stretch at 47–200 (SLTFSQKQAL…LIDELRGGFE (154 aa)) folds into the Globin domain. Residues H111 and H143 each contribute to the heme site.

The protein belongs to the globin family.

The chain is Globin-like protein 9 from Caenorhabditis briggsae.